The following is a 131-amino-acid chain: Keratin, high-sulfur matrix protein, IIIA3 (131 aa).

In terms of tissue distribution, wool.

Functionally, the keratin products of mammalian epidermal derivatives such as wool and hair consist of microfibrils embedded in a rigid matrix of other proteins. The matrix proteins include the high-sulfur and high-tyrosine keratins, having molecular weights of 6-20 kDa, whereas the microfibrils contain the larger, low-sulfur keratins (40-56 kDa). This is Keratin, high-sulfur matrix protein, IIIA3 from Ovis aries (Sheep).